Reading from the N-terminus, the 184-residue chain is Peptide deformylase (184 aa).

Residues Cys-111 and His-154 each contribute to the Fe cation site. Residue Glu-155 is part of the active site. His-158 is a binding site for Fe cation.

The protein belongs to the polypeptide deformylase family. It depends on Fe(2+) as a cofactor.

It carries out the reaction N-terminal N-formyl-L-methionyl-[peptide] + H2O = N-terminal L-methionyl-[peptide] + formate. Functionally, removes the formyl group from the N-terminal Met of newly synthesized proteins. Requires at least a dipeptide for an efficient rate of reaction. N-terminal L-methionine is a prerequisite for activity but the enzyme has broad specificity at other positions. The chain is Peptide deformylase from Lactobacillus helveticus (strain DPC 4571).